Consider the following 102-residue polypeptide: Small ribosomal subunit protein uS10 (102 aa).

The protein belongs to the universal ribosomal protein uS10 family. As to quaternary structure, part of the 30S ribosomal subunit.

Involved in the binding of tRNA to the ribosomes. The protein is Small ribosomal subunit protein uS10 of Streptococcus thermophilus (strain CNRZ 1066).